The following is an 88-amino-acid chain: UPF0213 protein EF_2693 (88 aa).

One can recognise a GIY-YIG domain in the interval 5-82 (KSHYFYVLLC…KKLTRKQKEQ (78 aa)).

Belongs to the UPF0213 family.

The protein is UPF0213 protein EF_2693 of Enterococcus faecalis (strain ATCC 700802 / V583).